Consider the following 261-residue polypeptide: MKVLSSLAAALIALSAVDVEAEHVQRSLILGGGKVPVGSKTYTVGLRTTPEGDTFCGGALISPTHVLTTASCTAYEEGSSIPHWVAVGTHYLNGKKDGEQLKIVSAQNHTLYDASSFSYNLAVLTLEKPSKFAPIKLPKADGSDIFPRVWSKVMGWGVTSYPNGKPSNELQSVDVRVWGDNACENKLGVDKSSLCAGGEAGKDSCVGDTGDPLIKENGRGDADDILLGLSGWGTGCGDKDMPSVYSRVSAGIEWINSVIKK.

Positions 1–21 (MKVLSSLAAALIALSAVDVEA) are cleaved as a signal peptide. The 232-residue stretch at 29-260 (ILGGGKVPVG…GIEWINSVIK (232 aa)) folds into the Peptidase S1 domain. A disulfide bond links cysteine 56 and cysteine 72. Asparagine 108 carries an N-linked (GlcNAc...) asparagine glycan. 2 disulfide bridges follow: cysteine 183–cysteine 195 and cysteine 205–cysteine 236.

It belongs to the peptidase S1 family.

It is found in the secreted. Secreted effector that suppresses host plant glucan elicitor-mediated defense responses. Targets host endoglucanases and inhibits the endoglucanase-mediated release of elicitor-active glucan oligosaccharides from P.sojae cell walls. This chain is Glucanase inhibitor protein 3 (GIP3), found in Phytophthora sojae (strain P6497) (Soybean stem and root rot agent).